The following is a 165-amino-acid chain: UPF0179 protein Igni_1272 (165 aa).

Belongs to the UPF0179 family.

The protein is UPF0179 protein Igni_1272 of Ignicoccus hospitalis (strain KIN4/I / DSM 18386 / JCM 14125).